The primary structure comprises 201 residues: Potassium-transporting ATPase KdpC subunit (201 aa).

A helical membrane pass occupies residues 7–27; sequence PALVLLVALTAITGLAYPLAV.

The protein belongs to the KdpC family. As to quaternary structure, the system is composed of three essential subunits: KdpA, KdpB and KdpC.

Its subcellular location is the cell inner membrane. In terms of biological role, part of the high-affinity ATP-driven potassium transport (or Kdp) system, which catalyzes the hydrolysis of ATP coupled with the electrogenic transport of potassium into the cytoplasm. This subunit acts as a catalytic chaperone that increases the ATP-binding affinity of the ATP-hydrolyzing subunit KdpB by the formation of a transient KdpB/KdpC/ATP ternary complex. This Methylorubrum extorquens (strain CM4 / NCIMB 13688) (Methylobacterium extorquens) protein is Potassium-transporting ATPase KdpC subunit.